A 166-amino-acid chain; its full sequence is Putative tRNA (cytidine(34)-2'-O)-methyltransferase (166 aa).

S-adenosyl-L-methionine-binding residues include Leu83, Gly109, Ile130, and Ser138.

Belongs to the class IV-like SAM-binding methyltransferase superfamily. RNA methyltransferase TrmH family. TrmL subfamily.

It localises to the cytoplasm. The enzyme catalyses cytidine(34) in tRNA + S-adenosyl-L-methionine = 2'-O-methylcytidine(34) in tRNA + S-adenosyl-L-homocysteine + H(+). It carries out the reaction 5-carboxymethylaminomethyluridine(34) in tRNA(Leu) + S-adenosyl-L-methionine = 5-carboxymethylaminomethyl-2'-O-methyluridine(34) in tRNA(Leu) + S-adenosyl-L-homocysteine + H(+). Functionally, could methylate the ribose at the nucleotide 34 wobble position in tRNA. This chain is Putative tRNA (cytidine(34)-2'-O)-methyltransferase, found in Mycoplasma genitalium (strain ATCC 33530 / DSM 19775 / NCTC 10195 / G37) (Mycoplasmoides genitalium).